Consider the following 662-residue polypeptide: Fructose-1,6-bisphosphatase class 3 (662 aa).

Belongs to the FBPase class 3 family. The cofactor is Mn(2+).

It carries out the reaction beta-D-fructose 1,6-bisphosphate + H2O = beta-D-fructose 6-phosphate + phosphate. It functions in the pathway carbohydrate biosynthesis; gluconeogenesis. In Clostridium tetani (strain Massachusetts / E88), this protein is Fructose-1,6-bisphosphatase class 3.